We begin with the raw amino-acid sequence, 76 residues long: UPF0248 protein MmarC7_1289 (76 aa).

Belongs to the UPF0248 family.

This Methanococcus maripaludis (strain C7 / ATCC BAA-1331) protein is UPF0248 protein MmarC7_1289.